A 697-amino-acid chain; its full sequence is Elongation factor G (697 aa).

A tr-type G domain is found at Ala10–Leu285. GTP contacts are provided by residues Ala19–Thr26, Asp83–His87, and Asn137–Asp140.

It belongs to the TRAFAC class translation factor GTPase superfamily. Classic translation factor GTPase family. EF-G/EF-2 subfamily.

It localises to the cytoplasm. In terms of biological role, catalyzes the GTP-dependent ribosomal translocation step during translation elongation. During this step, the ribosome changes from the pre-translocational (PRE) to the post-translocational (POST) state as the newly formed A-site-bound peptidyl-tRNA and P-site-bound deacylated tRNA move to the P and E sites, respectively. Catalyzes the coordinated movement of the two tRNA molecules, the mRNA and conformational changes in the ribosome. This Lactobacillus acidophilus (strain ATCC 700396 / NCK56 / N2 / NCFM) protein is Elongation factor G.